The following is a 448-amino-acid chain: Chromosomal replication initiator protein DnaA (448 aa).

The tract at residues 1-85 (MHDNLPQIWE…EVHIVVPSEE (85 aa)) is domain I, interacts with DnaA modulators. Residues 85–110 (ERVGDTQNINARRSNAQSPIMGNSPL) form a domain II region. Residues 111 to 327 (ILNPKYTFDT…GALIRIVAYS (217 aa)) are domain III, AAA+ region. The ATP site is built by Gly155, Gly157, Lys158, and Thr159. The interval 328–448 (SLTNSEVTVE…DAIIKELKSD (121 aa)) is domain IV, binds dsDNA.

Belongs to the DnaA family. In terms of assembly, oligomerizes as a right-handed, spiral filament on DNA at oriC.

The protein localises to the cytoplasm. In terms of biological role, plays an essential role in the initiation and regulation of chromosomal replication. ATP-DnaA binds to the origin of replication (oriC) to initiate formation of the DNA replication initiation complex once per cell cycle. Binds the DnaA box (a 9 base pair repeat at the origin) and separates the double-stranded (ds)DNA. Forms a right-handed helical filament on oriC DNA; dsDNA binds to the exterior of the filament while single-stranded (ss)DNA is stabiized in the filament's interior. The ATP-DnaA-oriC complex binds and stabilizes one strand of the AT-rich DNA unwinding element (DUE), permitting loading of DNA polymerase. After initiation quickly degrades to an ADP-DnaA complex that is not apt for DNA replication. Binds acidic phospholipids. The polypeptide is Chromosomal replication initiator protein DnaA (Alkaliphilus metalliredigens (strain QYMF)).